The sequence spans 161 residues: MPSFDIVSEIDEVALRHAVENANRELSTRFDFRGVEASIAQNGLAVTLKTESDFQVRQLEELFTKACLKQNISAAGADKPEELEHSGKTFSLTLTFRQGIDQPVAKQIVKLIKESKIKVQASIQGDQVRVNGKKRDDLQAVMALLRESKIETPLQFNNFRD.

Belongs to the YajQ family.

Nucleotide-binding protein. This Alcanivorax borkumensis (strain ATCC 700651 / DSM 11573 / NCIMB 13689 / SK2) protein is Nucleotide-binding protein ABO_0048.